The following is a 140-amino-acid chain: 3-hydroxyacyl-[acyl-carrier-protein] dehydratase FabZ (140 aa).

Residue histidine 47 is part of the active site.

Belongs to the thioester dehydratase family. FabZ subfamily.

Its subcellular location is the cytoplasm. It catalyses the reaction a (3R)-hydroxyacyl-[ACP] = a (2E)-enoyl-[ACP] + H2O. Its function is as follows. Involved in unsaturated fatty acids biosynthesis. Catalyzes the dehydration of short chain beta-hydroxyacyl-ACPs and long chain saturated and unsaturated beta-hydroxyacyl-ACPs. The chain is 3-hydroxyacyl-[acyl-carrier-protein] dehydratase FabZ from Streptococcus pyogenes serotype M49 (strain NZ131).